The chain runs to 415 residues: Peptide chain release factor subunit 1-1 (415 aa).

It belongs to the eukaryotic release factor 1 family. As to quaternary structure, heterodimer of two subunits, one of which binds GTP.

It localises to the cytoplasm. Functionally, directs the termination of nascent peptide synthesis (translation) in response to the termination codons UAA, UAG and UGA. The protein is Peptide chain release factor subunit 1-1 of Methanosarcina acetivorans (strain ATCC 35395 / DSM 2834 / JCM 12185 / C2A).